The following is a 117-amino-acid chain: Modulator protein MzrA (117 aa).

Residues 1–11 (MMTNRRFRKPS) lie on the Cytoplasmic side of the membrane. The chain crosses the membrane as a helical span at residues 12 to 29 (AWRLLLLLLPLVVLLSMS). At 30 to 117 (SRRLPDEVML…SNGTSPVTRS (88 aa)) the chain is on the periplasmic side.

The protein belongs to the MzrA family. Interacts with EnvZ.

The protein resides in the cell inner membrane. Its function is as follows. Modulates the activity of the EnvZ/OmpR two-component regulatory system, probably by directly modulating EnvZ enzymatic activity and increasing stability of phosphorylated OmpR. In Dickeya dadantii (strain 3937) (Erwinia chrysanthemi (strain 3937)), this protein is Modulator protein MzrA.